Here is a 68-residue protein sequence, read N- to C-terminus: Small ribosomal subunit protein bS21 (68 aa).

A disordered region spans residues tyrosine 36–arginine 68. Positions glutamate 37 to alanine 49 are enriched in basic and acidic residues. Positions alanine 50 to arginine 59 are enriched in basic residues.

The protein belongs to the bacterial ribosomal protein bS21 family.

The protein is Small ribosomal subunit protein bS21 of Zymomonas mobilis subsp. mobilis (strain ATCC 31821 / ZM4 / CP4).